Reading from the N-terminus, the 828-residue chain is Periplasmic nitrate reductase (828 aa).

Positions 1-31 form a signal peptide, tat-type signal; that stretch reads MKLSRRSFMKANAVAAAAAAAGLSVPGVARA. One can recognise a 4Fe-4S Mo/W bis-MGD-type domain in the interval 39-95; sequence IKWDKAPCRFCGTGCGVLVGTQQGRVVACQGDPDAPVNRGLNCIKGYFLPKIMYGKD. [4Fe-4S] cluster-binding residues include C46, C49, C53, and C81. Mo-bis(molybdopterin guanine dinucleotide) is bound by residues K83, Q150, N175, C179, 212 to 219, 243 to 247, 262 to 264, M372, Q376, N482, 508 to 509, K531, D558, and 718 to 727; these read WGSNMAEM, STYQH, QSD, SD, and TGRVLEHWHT. F794 is a substrate binding site. Mo-bis(molybdopterin guanine dinucleotide) is bound by residues N802 and K819.

It belongs to the prokaryotic molybdopterin-containing oxidoreductase family. NasA/NapA/NarB subfamily. As to quaternary structure, component of the periplasmic nitrate reductase NapAB complex composed of NapA and NapB. [4Fe-4S] cluster is required as a cofactor. Requires Mo-bis(molybdopterin guanine dinucleotide) as cofactor. Post-translationally, predicted to be exported by the Tat system. The position of the signal peptide cleavage has not been experimentally proven.

Its subcellular location is the periplasm. The enzyme catalyses 2 Fe(II)-[cytochrome] + nitrate + 2 H(+) = 2 Fe(III)-[cytochrome] + nitrite + H2O. Functionally, catalytic subunit of the periplasmic nitrate reductase complex NapAB. Receives electrons from NapB and catalyzes the reduction of nitrate to nitrite. This is Periplasmic nitrate reductase from Escherichia coli O127:H6 (strain E2348/69 / EPEC).